The following is a 201-amino-acid chain: Lipopolysaccharide core heptose(II)-phosphate phosphatase (201 aa).

Residues 1–33 (MLAFTLRFIKNKRYFAILAGALVIIAGLASQHA) form the signal peptide.

The protein belongs to the phosphoglycerate mutase family. Ais subfamily.

It localises to the periplasm. It functions in the pathway bacterial outer membrane biogenesis; lipopolysaccharide metabolism. In terms of biological role, catalyzes the dephosphorylation of heptose(II) of the outer membrane lipopolysaccharide core. The chain is Lipopolysaccharide core heptose(II)-phosphate phosphatase from Salmonella typhi.